A 370-amino-acid chain; its full sequence is Putative FBD-associated F-box protein At1g50980 (370 aa).

The F-box domain maps to 31-77; that stretch reads IRTISEFPDKVLLKILSLLPSKDVVATGVLSKRWRSLWKDVKTFRTS. One can recognise an FBD domain in the interval 292-343; the sequence is LMGNQPDLIPKSLSSHLEILEWRQYNDTAQEREAAKYILANASGLRKATFYT.

The protein is Putative FBD-associated F-box protein At1g50980 of Arabidopsis thaliana (Mouse-ear cress).